A 445-amino-acid chain; its full sequence is KICSTOR subunit 2 (445 aa).

Belongs to the KICS2 family. In terms of assembly, part of the KICSTOR complex composed of KPTN, ITFG2, KICS2 and SZT2. SZT2 probably serves as a link between the other three proteins in the KICSTOR complex and may mediate the direct interaction with the GATOR complex via GATOR1. The KICSTOR complex interacts directly with the GATOR1 complex and most probably indirectly with the GATOR2 complex in an amino acid-independent manner.

It is found in the lysosome membrane. As part of the KICSTOR complex functions in the amino acid-sensing branch of the TORC1 signaling pathway. Recruits, in an amino acid-independent manner, the GATOR1 complex to the lysosomal membranes and allows its interaction with GATOR2 and the RAG GTPases. Functions upstream of the RAG GTPases and is required to negatively regulate mTORC1 signaling in absence of amino acids. In absence of the KICSTOR complex mTORC1 is constitutively localized to the lysosome and activated. The KICSTOR complex is also probably involved in the regulation of mTORC1 by glucose. The sequence is that of KICSTOR subunit 2 from Mus musculus (Mouse).